A 311-amino-acid chain; its full sequence is MNRTRSASMVQGGLNWDSLPLKLFAGGNAKFWNPADIDFSRDRADWERLTDDERSYATRLCAEFIAGEESVTQDIQPFMAAMRAEGRLGDEMYLTQFAFEEAKHVQVFRMWLDAVGVTDDLHHFLDDVPSYRTIFYEELPDCLNALTIDPSPAAQVRASVTYNHMVEGMLALTGYFGWHKICVERGILPGMQELVRRIGDDERRHMAWGTFTCRRHVAADDANWGVFETRMNELMPLGLRLIEEGFALYDPMPFDLSVDEFMAYASDKGMRRFGTIASARGRPLAEIDLDYTPVQLEDTFADEDARALAAV.

Residues Glu68, Glu101, and His104 each contribute to the Mn(2+) site. The 3-(O4'-tyrosyl)-valine (Val-Tyr) cross-link spans 71–162; the sequence is VTQDIQPFMA…AAQVRASVTY (92 aa). Glu101 is a binding site for Fe cation. Glu167, Glu202, and His205 together coordinate Fe cation.

It belongs to the ribonucleoside diphosphate reductase small chain family. R2-like ligand binding oxidase subfamily. In terms of assembly, homodimer. Fe cation is required as a cofactor. Mn(2+) serves as cofactor.

Probable oxidase that might be involved in lipid metabolism. The protein is R2-like ligand binding oxidase of Mycobacterium avium (strain 104).